The primary structure comprises 492 residues: MGCPNCGSTTFESDTASGNTYCTQCGVVVEQDAIVSEVTFGEASTGAAVVQGSLVSNDQTHARTFGGPYRNQGSVESRELTIANGRRRISALAIALKLNERHIEAAVRYFTLAINNNFIKGRRSQYVVASCLYIVCRISKTSHMLIDFSDILQINVFKLGSTFLKLCRVLRPNLPLLDPSLYISRFASLLEFGPETHRVANDAIRLVARMNRDWMQIGRRPAGICGACLLIAARMNNFRRSVREVVHVVKVADITIQKRLDEFKLTESGDLSIADFRNIWLEGQSDPPSFTKNQKFQQYGAQKVSNIDHTQEYMSPIKRTPDFDGNEVKSEELSQTVKVESQETPVHLKADEREIRKEVTETLKGDELRKISLQVNVKFSEEEVTLEDVDDDEIEDILLDKDEILTKTQVWMELNKDYLAEEEAKNLKLQEDLKKGIVRQPRKRRRYRPRDSTSDGIADTAAESAKEMMQQRAFSKKINYEALDMLFDEEQS.

The TFIIB-type zinc finger occupies 1–30 (MGCPNCGSTTFESDTASGNTYCTQCGVVVE). Residues C3, C6, C22, and C25 each contribute to the Zn(2+) site. The segment at 440–468 (QPRKRRRYRPRDSTSDGIADTAAESAKEM) is disordered.

Belongs to the TFIIB family. TFIIIB comprises the TATA-binding protein (TBP), the B-related factor (BRF) and a third subunit (Potential). Interacts with maf1.

The protein resides in the nucleus. Its function is as follows. General activator of RNA polymerase III transcription. This Schizosaccharomyces pombe (strain 972 / ATCC 24843) (Fission yeast) protein is Transcription factor IIIB 60 kDa subunit (brf1).